A 473-amino-acid polypeptide reads, in one-letter code: 3-isopropylmalate dehydratase large subunit 2 (473 aa).

3 residues coordinate [4Fe-4S] cluster: C350, C410, and C413.

This sequence belongs to the aconitase/IPM isomerase family. LeuC type 1 subfamily. In terms of assembly, heterodimer of LeuC and LeuD. Requires [4Fe-4S] cluster as cofactor.

It catalyses the reaction (2R,3S)-3-isopropylmalate = (2S)-2-isopropylmalate. The protein operates within amino-acid biosynthesis; L-leucine biosynthesis; L-leucine from 3-methyl-2-oxobutanoate: step 2/4. Functionally, catalyzes the isomerization between 2-isopropylmalate and 3-isopropylmalate, via the formation of 2-isopropylmaleate. In Salmonella typhimurium (strain LT2 / SGSC1412 / ATCC 700720), this protein is 3-isopropylmalate dehydratase large subunit 2.